Reading from the N-terminus, the 220-residue chain is Fructose-6-phosphate aldolase 2 (220 aa).

Catalysis depends on Lys-85, which acts as the Schiff-base intermediate with substrate.

It belongs to the transaldolase family. Type 3A subfamily. Homodecamer.

It localises to the cytoplasm. It carries out the reaction beta-D-fructose 6-phosphate = dihydroxyacetone + D-glyceraldehyde 3-phosphate. Its function is as follows. Catalyzes the reversible formation of fructose 6-phosphate from dihydroxyacetone and D-glyceraldehyde 3-phosphate via an aldolization reaction. This is Fructose-6-phosphate aldolase 2 (fsaB) from Escherichia coli O6:H1 (strain CFT073 / ATCC 700928 / UPEC).